The chain runs to 627 residues: MSRPGQGVMVPVNGLGFPPQNVARVVVWEWLNEHSRWRPYTATVCHHIENVLKEDARGSVVLGQVDAQLVPYIIDLQSMHQFRQDTGTMRPVRRNFYDPSSAPGKGIVWEWENDGGAWTAYDMDICITIQNAYEKQHPWLDLSSLGFCYLIYFNSMSQMNRQTRRRRRLRRRLDLAYPLTVGSIPKSQSWPVGASSGQPCSCQQCLLVNSTRAASNAILASQRRKAPIAPAAPPAPPPPPPPLPPGGPPGALVVRPSATFAGAALWAAPATGPTEPAPPPGVPPRSPSAPNGAPTPGQNNLSRPGPQRSTSVSARASIPPGVPALPVKNLNGTGPVHPALAGMTGILLCAAGLPVCLTRAPKPILHPPPVSKSDVKPVPGVPGVCRKTKKKHLKKSKNPEDVVRRYMQKVKNPPDEDCTICMERLVTASGYEGVLRNKSVRPELVGRLGRCGHMYHLLCLVAMYSNGNKDGSLQCPTCKAIYGEKTGTQPPGKMEFHLIPHSLPGFADTQTIRIVYDIPTGIQGPEHPNPGKKFTARGFPRHCYLPNNEKGRKVLRLLITAWERRLIFTIGTSNTTGESDTVVWNEIHHKTEFGSNLTGHGYPDASYLDNVLAELTAQGVSEAMAKA.

2 consecutive WWE domains span residues 14–94 (GLGF…PVRR) and 95–171 (NFYD…RLRR). Disordered stretches follow at residues 222–254 (QRRK…ALVV), 269–327 (PATG…ALPV), and 368–398 (PPVS…KSKN). 2 stretches are compositionally biased toward pro residues: residues 230-248 (PAAP…PGGP) and 275-287 (EPAP…PRSP). The short motif at 240-243 (PPPL) is the SH3-binding element. Residues 296–314 (PGQNNLSRPGPQRSTSVSA) are compositionally biased toward polar residues. Basic residues predominate over residues 386 to 396 (RKTKKKHLKKS). Residues 418-479 (CTICMERLVT…DGSLQCPTCK (62 aa)) form an RING-type zinc finger.

The protein belongs to the Deltex family. Homodimer. May form a heterodimer with other members of the Deltex family. Interacts with NOTCH1 via its N-terminal region and EIF3F, the interaction is required for NOTCH1 deubiquitination. Interacts with EP300. Forms a heterodimer with BBAP; the heterodimerization leading to an increase of in vitro ubiquitin ligase activity. Interacts with ITCH. Ubiquitinated; undergoes 'Lys-29'-linked polyubiquitination catalyzed by ITCH. As to expression, predominantly expressed in the brain and testis. Weakly expressed in the thymus, spleen and ovary. Predominantly expressed in regions containing post-mitotic differentiating neurons.

It localises to the cytoplasm. The protein resides in the nucleus. It carries out the reaction S-ubiquitinyl-[E2 ubiquitin-conjugating enzyme]-L-cysteine + [acceptor protein]-L-lysine = [E2 ubiquitin-conjugating enzyme]-L-cysteine + N(6)-ubiquitinyl-[acceptor protein]-L-lysine.. Its pathway is protein modification; protein ubiquitination. Its function is as follows. Regulator of Notch signaling, a signaling pathway involved in cell-cell communications that regulates a broad spectrum of cell-fate determinations. Mainly acts as a positive regulator of Notch, but it also acts as a negative regulator, depending on the developmental and cell context. Mediates the antineural activity of Notch, possibly by inhibiting the transcriptional activation mediated by MATCH1. Involved in neurogenesis, lymphogenesis and myogenesis, and may also be involved in MZB (Marginal zone B) cell differentiation. Promotes B-cell development at the expense of T-cell development, suggesting that it can antagonize NOTCH1. Functions as an ubiquitin ligase protein in vivo, mediating ubiquitination and promoting degradation of MEKK1, suggesting that it may regulate the Notch pathway via some ubiquitin ligase activity. The chain is E3 ubiquitin-protein ligase DTX1 (Dtx1) from Mus musculus (Mouse).